Reading from the N-terminus, the 314-residue chain is Short-chain dehydrogenase/reductase drtF (314 aa).

Residues valine 26, lysine 50, aspartate 73, asparagine 100, tyrosine 185, and lysine 189 each coordinate NADP(+). Tyrosine 185 (proton acceptor) is an active-site residue. The active-site Lowers pKa of active site Tyr is lysine 189.

Belongs to the short-chain dehydrogenases/reductases (SDR) family.

It functions in the pathway secondary metabolite biosynthesis; terpenoid biosynthesis. In terms of biological role, short-chain dehydrogenase/reductase; part of the gene cluster that mediates the biosynthesis of various drimane-type sesquiterpene esters, compounds that exhibit diverse biological activities and are widely present in eukaryotes. The pathway begins with the synthesis of the backbone drimenol by the terpene cyclase drtB using farnesyl pyrophosphate (FPP) as substrate. The cytochrome P450 monooxygenase drtD is then responsible for the hydroxylations at C-6, C-9 and C-12, as well as the oxidation of hydroxyl groups at C-6 and C-11 to a ketone and an aldehyde, respectively. Then, the biosynthesis can go in two directions, either the hydroxylated drimenol is further hydroxylated at C-2 and C-3 by an enzyme(s) not associated with the drt cluster, or the FAD-binding oxidoreductase drtC further oxidizes C-11 or C-12 to form the butyrolactone ring. DrtB, drtD and drtC are solely responsible for the formation of the different drimane structures observed during drimane sesquiterpenes biosynthesis. The polyketide synthase drtA synthesizes different lengths (C6 and C8) of PKS chains, which are then oxidized to varying degrees by the short-chain dehydrogenase drtF. Finally, these PKS chains are transferred onto drimane sesquiterpenes by the acyltransferase drtE, forming the sesquiterpene esters. In addition to the different fatty acyl-CoA chains produced by drtA, drtE is also able to use cinnamoyl-CoA as a substrate. The polypeptide is Short-chain dehydrogenase/reductase drtF (Aspergillus calidoustus).